Here is a 205-residue protein sequence, read N- to C-terminus: Potassium-transporting ATPase KdpC subunit (205 aa).

Residues 9 to 29 form a helical membrane-spanning segment; that stretch reads VFAVLFLFILGFVYPTVTSLI.

It belongs to the KdpC family. The system is composed of three essential subunits: KdpA, KdpB and KdpC.

It is found in the cell membrane. Functionally, part of the high-affinity ATP-driven potassium transport (or Kdp) system, which catalyzes the hydrolysis of ATP coupled with the electrogenic transport of potassium into the cytoplasm. This subunit acts as a catalytic chaperone that increases the ATP-binding affinity of the ATP-hydrolyzing subunit KdpB by the formation of a transient KdpB/KdpC/ATP ternary complex. The polypeptide is Potassium-transporting ATPase KdpC subunit (Thermoplasma acidophilum (strain ATCC 25905 / DSM 1728 / JCM 9062 / NBRC 15155 / AMRC-C165)).